A 286-amino-acid polypeptide reads, in one-letter code: Thymidylate synthase (286 aa).

A dUMP-binding site is contributed by arginine 21. Asparagine 51 lines the (6R)-5,10-methylene-5,6,7,8-tetrahydrofolate pocket. 150 to 151 (RR) serves as a coordination point for dUMP. The active-site Nucleophile is cysteine 170. Residues 190–193 (RSAD), asparagine 201, and 231–233 (HIY) each bind dUMP. Aspartate 193 is a binding site for (6R)-5,10-methylene-5,6,7,8-tetrahydrofolate. (6R)-5,10-methylene-5,6,7,8-tetrahydrofolate is bound at residue alanine 285.

This sequence belongs to the thymidylate synthase family. Bacterial-type ThyA subfamily. Homodimer.

It localises to the cytoplasm. The catalysed reaction is dUMP + (6R)-5,10-methylene-5,6,7,8-tetrahydrofolate = 7,8-dihydrofolate + dTMP. Its pathway is pyrimidine metabolism; dTTP biosynthesis. Functionally, catalyzes the reductive methylation of 2'-deoxyuridine-5'-monophosphate (dUMP) to 2'-deoxythymidine-5'-monophosphate (dTMP) while utilizing 5,10-methylenetetrahydrofolate (mTHF) as the methyl donor and reductant in the reaction, yielding dihydrofolate (DHF) as a by-product. This enzymatic reaction provides an intracellular de novo source of dTMP, an essential precursor for DNA biosynthesis. The polypeptide is Thymidylate synthase (Mycoplasmopsis pulmonis (strain UAB CTIP) (Mycoplasma pulmonis)).